We begin with the raw amino-acid sequence, 107 residues long: Glutaredoxin-1 (107 aa).

N-acetylalanine is present on alanine 2. The region spanning 3 to 106 is the Glutaredoxin domain; the sequence is QEFVNCKIQS…ARLKQIGALQ (104 aa). N6-succinyllysine is present on lysine 9. Cystine bridges form between cysteine 23/cysteine 26 and cysteine 79/cysteine 83.

Belongs to the glutaredoxin family.

The protein localises to the cytoplasm. Has a glutathione-disulfide oxidoreductase activity in the presence of NADPH and glutathione reductase. Reduces low molecular weight disulfides and proteins. The polypeptide is Glutaredoxin-1 (Glrx) (Rattus norvegicus (Rat)).